Consider the following 174-residue polypeptide: Large ribosomal subunit protein uL16 (174 aa).

Belongs to the universal ribosomal protein uL16 family.

The chain is Large ribosomal subunit protein uL16 from Staphylothermus marinus (strain ATCC 43588 / DSM 3639 / JCM 9404 / F1).